Consider the following 388-residue polypeptide: Adenosine deaminase-like protein (388 aa).

Residues 1–13 show a composition bias toward basic residues; sequence MPNNSKHKKKQQR. A disordered region spans residues 1–34; it reads MPNNSKHKKKQQRRQQEAQKKSRAKQIETDKKND. A compositionally biased stretch (basic and acidic residues) spans 14–34; it reads RQQEAQKKSRAKQIETDKKND. Zn(2+) is bound by residues His65 and His67. Residues His67, His114, 146 to 149, Asp186, and Gly218 each bind N(6)-methyl-AMP; that span reads TSPK. His245 provides a ligand contact to Zn(2+). N(6)-methyl-AMP is bound by residues Glu248, Asp326, and Asp327. The Proton donor role is filled by Glu248. Position 326 (Asp326) interacts with Zn(2+).

Belongs to the metallo-dependent hydrolases superfamily. Adenosine and AMP deaminases family. As to quaternary structure, monomer. Zn(2+) serves as cofactor.

It catalyses the reaction N(6)-methyl-AMP + H2O + H(+) = IMP + methylamine. Functionally, catalyzes the hydrolysis of the free cytosolic methylated adenosine nucleotide N(6)-methyl-AMP (N6-mAMP) to produce inositol monophosphate (IMP) and methylamine. Is required for the catabolism of cytosolic N6-mAMP, which is derived from the degradation of mRNA containing N6-methylated adenine (m6A). The chain is Adenosine deaminase-like protein from Caenorhabditis elegans.